A 206-amino-acid chain; its full sequence is Small ribosomal subunit protein uS4 (206 aa).

The region spanning G96–K156 is the S4 RNA-binding domain.

This sequence belongs to the universal ribosomal protein uS4 family. Part of the 30S ribosomal subunit. Contacts protein S5. The interaction surface between S4 and S5 is involved in control of translational fidelity.

Functionally, one of the primary rRNA binding proteins, it binds directly to 16S rRNA where it nucleates assembly of the body of the 30S subunit. In terms of biological role, with S5 and S12 plays an important role in translational accuracy. The chain is Small ribosomal subunit protein uS4 from Klebsiella pneumoniae (strain 342).